A 258-amino-acid polypeptide reads, in one-letter code: MRASKTPILINGSPWLLDFRRRSSREFDWEIAEHLEVPEAYFQAYDPLTTWFEWFSRIGYRDYTDAEAEIERDAEENVRQHQVSVQPDLTLTQRLSSEGSIQLPVPFLKTADQFCILSSLLYAGFGVVETRKFHGDTIFLKNVPSVGARHGIEAYVSLDDGRYYYDCEQHRLFSAGYRGDLRSGQIDIVFRPEVYMWRYQTAACLADVYLDLGHILGTLSMVASLYDTSITSRSAEAAPVDLINAVHLQRIAVDGFNP.

In terms of biological role, the actions of the proteins TfxB, TfxD and TfxF are implicated in the processing of the inactive trifolitoxin (TfxA) precursor into the active peptide. The protein is Trifolitoxin-processing protein TfxF (tfxF) of Rhizobium leguminosarum bv. trifolii.